A 181-amino-acid polypeptide reads, in one-letter code: ATP-dependent protease subunit HslV (181 aa).

The active site involves Thr7. Na(+) contacts are provided by Gly166, Cys169, and Thr172.

The protein belongs to the peptidase T1B family. HslV subfamily. In terms of assembly, a double ring-shaped homohexamer of HslV is capped on each side by a ring-shaped HslU homohexamer. The assembly of the HslU/HslV complex is dependent on binding of ATP.

Its subcellular location is the cytoplasm. It carries out the reaction ATP-dependent cleavage of peptide bonds with broad specificity.. With respect to regulation, allosterically activated by HslU binding. Its function is as follows. Protease subunit of a proteasome-like degradation complex believed to be a general protein degrading machinery. This chain is ATP-dependent protease subunit HslV, found in Delftia acidovorans (strain DSM 14801 / SPH-1).